The chain runs to 591 residues: L-gulonolactone oxidase 2 (591 aa).

A signal peptide spans 1 to 27 (MAFTFPPSYRTLVGLYYIFTLMHTAVS). The FAD-binding PCMH-type domain occupies 56–238 (STCRAANVAY…SQVTFELQPM (183 aa)).

Belongs to the oxygen-dependent FAD-linked oxidoreductase family. FAD is required as a cofactor.

It catalyses the reaction L-gulono-1,4-lactone + O2 = L-ascorbate + H2O2 + H(+). It participates in cofactor biosynthesis; L-ascorbate biosynthesis. Catalyzes the oxidation of L-gulono-1,4-lactone to ascorbic acid. L-gulono-1,4-lactone is oxidized to hydrogen peroxide and L-xylo-hexulonolactone which spontaneously isomerizes to L-ascorbate. In Arabidopsis thaliana (Mouse-ear cress), this protein is L-gulonolactone oxidase 2.